The sequence spans 111 residues: uncharacterized protein (111 aa).

The protein belongs to the asfivirus E111R family.

This is an uncharacterized protein from African swine fever virus (strain Badajoz 1971 Vero-adapted) (Ba71V).